The following is a 578-amino-acid chain: PX domain-containing protein kinase-like protein (578 aa).

The PX domain maps to 14-126; the sequence is LDDTVPLTAA…KFLDPNNYSA (113 aa). The Protein kinase domain occupies 88 to 481; that stretch reads FIAERQKGLQ…LENSEEHSAK (394 aa). Composition is skewed to basic residues over residues 437–448 and 457–469; these read IHQHRRLTRAQS and KKRK…KSKR. Disordered stretches follow at residues 437–548 and 559–578; these read IHQH…NGMS and FQKG…PKIG. The span at 483-513 shows a compositional bias: low complexity; that stretch reads SNSNNSAGSGASSPLTSPSSPTPPSTSGISA. Positions 514 to 530 are enriched in pro residues; the sequence is LPPPPPPPPPPAAPLPP. In terms of domain architecture, WH2 spans 548–567; that stretch reads SRGALLSSIQNFQKGTLRKA. A compositionally biased stretch (basic and acidic residues) spans 568–578; that stretch reads KTCDHSAPKIG.

Belongs to the protein kinase superfamily. In terms of tissue distribution, widely expressed in all tissues examined except in heart. Isoform 1 is expressed in high levels in the brain, skeletal muscle, spleen and testis. Isoform 7 expression has yet to be demonstrated.

It is found in the cytoplasm. The protein localises to the cell membrane. In terms of biological role, binds to and modulates brain Na,K-ATPase subunits ATP1B1 and ATP1B3 and may thereby participate in the regulation of electrical excitability and synaptic transmission. May not display kinase activity. This is PX domain-containing protein kinase-like protein from Homo sapiens (Human).